Consider the following 81-residue polypeptide: Lantipeptide prochlorosin 1.1 (81 aa).

Positions Met-1–Gly-65 are excised as a propeptide. A cross-link (beta-methyllanthionine (Cys-Thr)) is located at residues Cys-68–Thr-72. A cross-link (beta-methyllanthionine (Thr-Cys)) is located at residues Thr-77–Cys-81.

Post-translationally, cross-links are proved in vitro, when coepressed in E.coli with the ProcM lanthionine synthetase. The beta-methyllanthionine residues have a DL configuration (with 2S,3S,6R stereochemistry). In terms of processing, maturation of prochlorosin involves the enzymatic conversion of Thr, and Ser into dehydrated AA and the formation of thioether bonds with cysteines. This is followed by membrane translocation and cleavage of the modified precursor.

The protein localises to the secreted. Functionally, lanthionine-containing peptide (lantipeptide) with unknown function. Does not show antibiotic activity against Lactococcus lactis 117 and Bacillus subtilis 6633 bacteria. Organisms that produce this peptide live in oligotrophic environments at very dilute concentrations, suggesting this peptide is not secreted to influence other bacteria. The chain is Lantipeptide prochlorosin 1.1 from Prochlorococcus marinus (strain MIT 9313).